The sequence spans 358 residues: Cilia- and flagella-associated protein 263 (358 aa).

Coiled coils occupy residues 93-138, 176-200, and 266-343; these read YKKM…FKRN, RKNSALLTHKKKQQAQLRQQEEMAE, and RTKL…YTKS.

It belongs to the CFAP263 family. Forms a complex with CFAP184; the interaction is required for functional activity in cilia. Interacts with HAP1 and PCM1.

The protein resides in the cytoplasm. Its subcellular location is the cytoskeleton. The protein localises to the microtubule organizing center. It is found in the centrosome. It localises to the centriolar satellite. The protein resides in the cell projection. Its subcellular location is the cilium. Component of centriolar satellites contributing to primary cilium formation. In complex with CFAP263, acts as a regulator of ciliary beating that connects radial spoke 3 (RS3) to the inner dynein arm (IDA) and the nexin-dynein regulatory complex (N-DRC). The complex is positioned parallel to N-DRC and forms a connection between the arch at the base of RS3, the IDA tail and N-DRC. This Danio rerio (Zebrafish) protein is Cilia- and flagella-associated protein 263 (cfap263).